The primary structure comprises 449 residues: Probable phosphoglucosamine mutase (449 aa).

The active-site Phosphoserine intermediate is S101. Mg(2+)-binding residues include S101, D239, D241, and D243. S101 is subject to Phosphoserine.

The protein belongs to the phosphohexose mutase family. The cofactor is Mg(2+). Activated by phosphorylation.

It catalyses the reaction alpha-D-glucosamine 1-phosphate = D-glucosamine 6-phosphate. In terms of biological role, catalyzes the conversion of glucosamine-6-phosphate to glucosamine-1-phosphate. This chain is Probable phosphoglucosamine mutase, found in Methanothermobacter thermautotrophicus (strain ATCC 29096 / DSM 1053 / JCM 10044 / NBRC 100330 / Delta H) (Methanobacterium thermoautotrophicum).